We begin with the raw amino-acid sequence, 183 residues long: Acireductone dioxygenase (183 aa).

Residues histidine 99, histidine 101, glutamate 105, and histidine 144 each coordinate Fe(2+). Ni(2+) is bound by residues histidine 99, histidine 101, glutamate 105, and histidine 144.

It belongs to the acireductone dioxygenase (ARD) family. In terms of assembly, monomer. Fe(2+) serves as cofactor. It depends on Ni(2+) as a cofactor.

The enzyme catalyses 1,2-dihydroxy-5-(methylsulfanyl)pent-1-en-3-one + O2 = 3-(methylsulfanyl)propanoate + CO + formate + 2 H(+). It catalyses the reaction 1,2-dihydroxy-5-(methylsulfanyl)pent-1-en-3-one + O2 = 4-methylsulfanyl-2-oxobutanoate + formate + 2 H(+). It participates in amino-acid biosynthesis; L-methionine biosynthesis via salvage pathway; L-methionine from S-methyl-5-thio-alpha-D-ribose 1-phosphate: step 5/6. Functionally, catalyzes 2 different reactions between oxygen and the acireductone 1,2-dihydroxy-3-keto-5-methylthiopentene (DHK-MTPene) depending upon the metal bound in the active site. Fe-containing acireductone dioxygenase (Fe-ARD) produces formate and 2-keto-4-methylthiobutyrate (KMTB), the alpha-ketoacid precursor of methionine in the methionine recycle pathway. Ni-containing acireductone dioxygenase (Ni-ARD) produces methylthiopropionate, carbon monoxide and formate, and does not lie on the methionine recycle pathway. In Microcystis aeruginosa (strain NIES-843 / IAM M-2473), this protein is Acireductone dioxygenase.